The primary structure comprises 347 residues: Biotin synthase (347 aa).

The region spanning 40-258 (AQVQVSTLLS…IAVARIVMPR (219 aa)) is the Radical SAM core domain. Residues Cys55, Cys59, and Cys62 each contribute to the [4Fe-4S] cluster site. Cys99, Cys130, Cys190, and Arg262 together coordinate [2Fe-2S] cluster.

Belongs to the radical SAM superfamily. Biotin synthase family. Homodimer. The cofactor is [4Fe-4S] cluster. It depends on [2Fe-2S] cluster as a cofactor.

It catalyses the reaction (4R,5S)-dethiobiotin + (sulfur carrier)-SH + 2 reduced [2Fe-2S]-[ferredoxin] + 2 S-adenosyl-L-methionine = (sulfur carrier)-H + biotin + 2 5'-deoxyadenosine + 2 L-methionine + 2 oxidized [2Fe-2S]-[ferredoxin]. It functions in the pathway cofactor biosynthesis; biotin biosynthesis; biotin from 7,8-diaminononanoate: step 2/2. In terms of biological role, catalyzes the conversion of dethiobiotin (DTB) to biotin by the insertion of a sulfur atom into dethiobiotin via a radical-based mechanism. The sequence is that of Biotin synthase from Stenotrophomonas maltophilia (strain R551-3).